Reading from the N-terminus, the 274-residue chain is Pantothenate synthetase (274 aa).

27-34 (MGALHKGH) contacts ATP. Residue H34 is the Proton donor of the active site. Residue Q58 participates in (R)-pantoate binding. Q58 is a binding site for beta-alanine. 145-148 (GQKD) contributes to the ATP binding site. Q151 lines the (R)-pantoate pocket. 182–185 (LSSR) serves as a coordination point for ATP.

The protein belongs to the pantothenate synthetase family. As to quaternary structure, homodimer.

Its subcellular location is the cytoplasm. The enzyme catalyses (R)-pantoate + beta-alanine + ATP = (R)-pantothenate + AMP + diphosphate + H(+). It functions in the pathway cofactor biosynthesis; (R)-pantothenate biosynthesis; (R)-pantothenate from (R)-pantoate and beta-alanine: step 1/1. Functionally, catalyzes the condensation of pantoate with beta-alanine in an ATP-dependent reaction via a pantoyl-adenylate intermediate. The sequence is that of Pantothenate synthetase from Wolinella succinogenes (strain ATCC 29543 / DSM 1740 / CCUG 13145 / JCM 31913 / LMG 7466 / NCTC 11488 / FDC 602W) (Vibrio succinogenes).